Here is a 115-residue protein sequence, read N- to C-terminus: MARVKRGNVARKRRNKILRLARGFQGSNGSLFRTANQRVMKALCNAYRDRRRRKRDFRRLWIARINAAARINGVSYSRLIGDLKKADVRINRKMLAQLAVMDPKSFTSVVTSAKS.

This sequence belongs to the bacterial ribosomal protein bL20 family.

Its function is as follows. Binds directly to 23S ribosomal RNA and is necessary for the in vitro assembly process of the 50S ribosomal subunit. It is not involved in the protein synthesizing functions of that subunit. The polypeptide is Large ribosomal subunit protein bL20 (Prochlorococcus marinus (strain MIT 9303)).